The following is a 359-amino-acid chain: Type-1 angiotensin II receptor A (359 aa).

Residues 1–25 (MALNSSAEDGIKRIQDDCPKAGRHS) lie on the Extracellular side of the membrane. Asn4 carries N-linked (GlcNAc...) asparagine glycosylation. Angiotensin II is bound by residues Gln15 and Asp17. Intrachain disulfides connect Cys18–Cys274 and Cys101–Cys180. A helical transmembrane segment spans residues 26 to 55 (YIFVMIPTLYSIIFVVGIFGNSLVVIVIYF). Topologically, residues 56-61 (YMKLKT) are cytoplasmic. Residues 62–89 (VASVFLLNLALADLCFLLTLPLWAVYTA) traverse the membrane as a helical segment. The Extracellular portion of the chain corresponds to 90 to 98 (MEYRWPFGN). Residues 99 to 125 (HLCKIASASVSFNLYASVFLLTCLSID) traverse the membrane as a helical segment. The Cytoplasmic segment spans residues 126 to 141 (RYLAIVHPMKSRLRRT). Residues 142-165 (MLVAKVTCIIIWLMAGLASLPAVI) form a helical membrane-spanning segment. Topologically, residues 166–190 (HRNVYFIENTNITVCAFHYESRNST) are extracellular. Position 167 (Arg167) interacts with angiotensin II. Asn176 is a glycosylation site (N-linked (GlcNAc...) asparagine). The angiotensin II site is built by Phe182, His183, and Tyr184. An N-linked (GlcNAc...) asparagine glycan is attached at Asn188. A helical membrane pass occupies residues 191-216 (LPIGLGLTKNILGFLFPFLIILTSYT). An angiotensin II-binding site is contributed by Lys199. The Cytoplasmic portion of the chain corresponds to 217–239 (LIWKALKKAYEIQKNKPRNDDIF). The helical transmembrane segment at 240–268 (RIIMAIVLFFFFSWVPHQIFTFLDVLIQL) threads the bilayer. The Extracellular segment spans residues 269-278 (GVIHDCKISD). Residues 279 to 304 (IVDTAMPITICIAYFNNCLNPLFYGF) form a helical membrane-spanning segment. Topologically, residues 305-359 (LGKKFKKYFLQLLKYIPPKAKSHSSLSTKMSTLSYRPSDNMSSSAKKPASCFEVE) are cytoplasmic. Positions 337–349 (LSYRPSDNMSSSA) are enriched in polar residues. The segment at 337-359 (LSYRPSDNMSSSAKKPASCFEVE) is disordered. Residue Cys355 is the site of S-palmitoyl cysteine attachment.

Belongs to the G-protein coupled receptor 1 family. Interacts with MAS1. Interacts with ARRB1. Interacts with FLNA (via filamin repeat 21); increases PKA-mediated phosphorylation of FLNA. In terms of processing, C-terminal Ser or Thr residues may be phosphorylated. In terms of tissue distribution, is expressed in the liver, kidney, aorta, lung, uterus, ovary, spleen, heart, adrenal gland, and vascular smooth muscle cell.

The protein resides in the cell membrane. Receptor for angiotensin II, a vasoconstricting peptide, which acts as a key regulator of blood pressure and sodium retention by the kidney. The activated receptor in turn couples to G-alpha proteins G(q) (GNAQ, GNA11, GNA14 or GNA15) and thus activates phospholipase C and increases the cytosolic Ca(2+) concentrations, which in turn triggers cellular responses such as stimulation of protein kinase C. In Rattus norvegicus (Rat), this protein is Type-1 angiotensin II receptor A (Agtr1).